Consider the following 440-residue polypeptide: Thymidine phosphorylase (440 aa).

This sequence belongs to the thymidine/pyrimidine-nucleoside phosphorylase family. Homodimer.

It catalyses the reaction thymidine + phosphate = 2-deoxy-alpha-D-ribose 1-phosphate + thymine. The protein operates within pyrimidine metabolism; dTMP biosynthesis via salvage pathway; dTMP from thymine: step 1/2. Functionally, the enzymes which catalyze the reversible phosphorolysis of pyrimidine nucleosides are involved in the degradation of these compounds and in their utilization as carbon and energy sources, or in the rescue of pyrimidine bases for nucleotide synthesis. In Salmonella choleraesuis (strain SC-B67), this protein is Thymidine phosphorylase.